The primary structure comprises 176 residues: NAD(P)H-quinone oxidoreductase subunit 6, chloroplastic (176 aa).

5 helical membrane-spanning segments follow: residues 10–30 (FLLVFFGSGLILGGLGVILFT), 33–53 (IFSAFSLGLVLVCISLFYIIA), 61–81 (AQLLIYVGAINVLIIFAVMFI), 92–112 (LFTLGDGMTLVICTGIFFLLI), and 152–172 (FFPPFELISIILLVALIGAIA).

It belongs to the complex I subunit 6 family. As to quaternary structure, NDH is composed of at least 16 different subunits, 5 of which are encoded in the nucleus.

It is found in the plastid. Its subcellular location is the chloroplast thylakoid membrane. The enzyme catalyses a plastoquinone + NADH + (n+1) H(+)(in) = a plastoquinol + NAD(+) + n H(+)(out). It carries out the reaction a plastoquinone + NADPH + (n+1) H(+)(in) = a plastoquinol + NADP(+) + n H(+)(out). In terms of biological role, NDH shuttles electrons from NAD(P)H:plastoquinone, via FMN and iron-sulfur (Fe-S) centers, to quinones in the photosynthetic chain and possibly in a chloroplast respiratory chain. The immediate electron acceptor for the enzyme in this species is believed to be plastoquinone. Couples the redox reaction to proton translocation, and thus conserves the redox energy in a proton gradient. This chain is NAD(P)H-quinone oxidoreductase subunit 6, chloroplastic (ndhG), found in Fagopyrum esculentum subsp. ancestrale (Wild buckwheat).